Here is a 103-residue protein sequence, read N- to C-terminus: MAAKLRKGDKVVVLAGKDKGKEGTITSVDPKAGKAVVDGVNIAIRHTRQTQTSQGGRLPKALPIDLSNLALLDKNGKATRVGFRMEGDKKVRFAKTTGDVIDA.

Belongs to the universal ribosomal protein uL24 family. As to quaternary structure, part of the 50S ribosomal subunit.

One of two assembly initiator proteins, it binds directly to the 5'-end of the 23S rRNA, where it nucleates assembly of the 50S subunit. In terms of biological role, one of the proteins that surrounds the polypeptide exit tunnel on the outside of the subunit. The chain is Large ribosomal subunit protein uL24 from Ruegeria pomeroyi (strain ATCC 700808 / DSM 15171 / DSS-3) (Silicibacter pomeroyi).